A 60-amino-acid chain; its full sequence is Large ribosomal subunit protein bL32 (60 aa).

Belongs to the bacterial ribosomal protein bL32 family.

The protein is Large ribosomal subunit protein bL32 of Thermosipho africanus (strain TCF52B).